Reading from the N-terminus, the 1125-residue chain is Exportin-6 (1125 aa).

Ala2 carries the post-translational modification N-acetylalanine. The region spanning 31 to 97 is the Importin N-terminal domain; the sequence is IEELLNNFAQ…RSCLPKLLLA (67 aa). Ser199 carries the phosphoserine modification. 2 positions are modified to phosphothreonine: Thr201 and Thr204. Ser208 and Ser224 each carry phosphoserine.

This sequence belongs to the exportin family. Found in a complex with XPO6, Ran, ACTB and PFN1. Interacts with ACTB. Interacts with ACTB in a RanGTP-dependent manner.

The protein localises to the nucleus. It localises to the cytoplasm. Its function is as follows. Mediates the nuclear export of actin and profilin-actin complexes in somatic cells. This Mus musculus (Mouse) protein is Exportin-6 (Xpo6).